We begin with the raw amino-acid sequence, 405 residues long: Scramblase ANY1 (405 aa).

Topologically, residues methionine 1–phenylalanine 51 are cytoplasmic. The helical transmembrane segment at isoleucine 52 to isoleucine 72 threads the bilayer. Over glutamate 73–lysine 76 the chain is Lumenal. The helical transmembrane segment at threonine 77–isoleucine 97 threads the bilayer. The Cytoplasmic portion of the chain corresponds to serine 98 to threonine 103. The chain crosses the membrane as a helical span at residues proline 104–leucine 124. Topologically, residues arginine 125–serine 177 are lumenal. A helical membrane pass occupies residues leucine 178–isoleucine 198. Topologically, residues leucine 199–arginine 223 are cytoplasmic. The chain crosses the membrane as a helical span at residues phenylalanine 224–asparagine 244. Topologically, residues tryptophan 245–serine 254 are lumenal. A PQ-loop domain is found at leucine 252 to asparagine 309. The helical transmembrane segment at isoleucine 255–leucine 275 threads the bilayer. Over tyrosine 276–glycine 283 the chain is Cytoplasmic. A helical membrane pass occupies residues phenylalanine 284–glycine 306. Residues alanine 307 to alanine 312 lie on the Lumenal side of the membrane. Residues leucine 313–tyrosine 335 form a helical membrane-spanning segment. The Cytoplasmic portion of the chain corresponds to arginine 336–leucine 405. Positions leucine 379–leucine 405 are disordered. The span at glycine 396–leucine 405 shows a compositional bias: polar residues.

In terms of assembly, interacts with NEO1.

The protein resides in the golgi apparatus membrane. It is found in the late endosome membrane. Functionally, phospholipid scramblase that transports phosphatidylserine (PS) and phosphatidylethalonamine (PE) bidirectionally from one leaflet to the other of the phospholipid bilayer to at least partially collapse the membrane asymmetry established by NEO1 and other flippases. The PS scramblase activity has been disputed. Functions in the trafficking pathway from endosomes to the trans-Golgi network (TGN). In Saccharomyces cerevisiae (strain ATCC 204508 / S288c) (Baker's yeast), this protein is Scramblase ANY1.